The chain runs to 148 residues: Thioredoxin H8 (148 aa).

A Thioredoxin domain is found at 1–145 (MGANVSTPDQ…LERKLNKYTQ (145 aa)). Catalysis depends on nucleophile residues Cys71 and Cys74. Cys71 and Cys74 form a disulfide bridge.

The protein belongs to the thioredoxin family. Plant H-type subfamily.

It localises to the cytoplasm. In terms of biological role, probable thiol-disulfide oxidoreductase that may be involved in the redox regulation of a number of cytosolic enzymes. The polypeptide is Thioredoxin H8 (TRX8) (Arabidopsis thaliana (Mouse-ear cress)).